A 728-amino-acid chain; its full sequence is MPCLLPTLLRATRAALLLQSPRVVAAPASQRLLSAPAQPAASPSSMDSAEELLAPLRLAVRQQGDFVRKLKEDKAPQVDVDRAVAELKARKRVLEAKELALQPKDDIVDRAKMEDTLKRRFFYDQAFAIYGGVSGLYDFGPVGCALKNNIIQTWRQHFIQEEQILEIDCTMLTPEPVLKTSGHVDKFADFMVKDVKNGECFRADHLLKAHLQKLMSDKKCSAEKKSEMESVLAQLDNYGQQELADLFVNYNVKSPTTGNDLSPPVPFNLMFQTFIGPGGNMPGYLRPETAQGIFLNFKRLLEFNQGKLPFAAAQIGNSFRNEISPRSGLIRVREFTMAEIEHFVDPTEKDHPKFPSVADLYLYLYSAKAQVTGQSARKMRLGDAVEQGVINNSVLGYFIGRIYLYLTKVGISPDKLRFRQHMENEMAHYACDCWDAESKTSYGWIEIVGCADRSCYDLSCHARATKVPLVAEKPLKEPKTVNVVQFEPNKGAVGKAYKKDAKLVLEYLGACDECYITEMELLLSEKGEFTIETEGKTFQLTKDMVSVKRFQKTLHVEEVVPSVIEPSFGLGRIMYTILEHTFHVREGDEQRTFFSFPAVVAPFKCSVLPLSQNQEFMPFVKELSEALTRNGVSHKVDDSSGSIGRRYARTDEIGVAFGITIDFDTVNKTPHTATLRDRDSMRQIRAEVSELPSVVRDLANGNITWADVEARYPLFEGQETGKKETVEE.

A mitochondrion-targeting transit peptide spans 1-32 (MPCLLPTLLRATRAALLLQSPRVVAAPASQRL). Residues 52–108 (LLAPLRLAVRQQGDFVRKLKEDKAPQVDVDRAVAELKARKRVLEAKELALQPKDDIV) enclose the WHEP-TRS domain. N6-acetyllysine is present on K193. A glycine-binding site is contributed by E288. ATP-binding positions include 320 to 322 (RNE) and 331 to 332 (RV). E339 is a binding site for glycine. Y442 bears the Phosphotyrosine mark. 446 to 447 (EI) provides a ligand contact to ATP. Residue K490 is modified to N6-acetyllysine. 565-567 (EPS) contributes to the glycine binding site. R572 lines the ATP pocket. S689 is modified (phosphoserine). A Phosphothreonine modification is found at T725.

It belongs to the class-II aminoacyl-tRNA synthetase family. As to quaternary structure, homodimer.

It is found in the cytoplasm. The protein resides in the mitochondrion. It localises to the cell projection. Its subcellular location is the axon. The protein localises to the secreted. It is found in the extracellular exosome. The enzyme catalyses tRNA(Gly) + glycine + ATP = glycyl-tRNA(Gly) + AMP + diphosphate. It catalyses the reaction 2 ATP + H(+) = P(1),P(4)-bis(5'-adenosyl) tetraphosphate + diphosphate. In terms of biological role, catalyzes the ATP-dependent ligation of glycine to the 3'-end of its cognate tRNA, via the formation of an aminoacyl-adenylate intermediate (Gly-AMP). Also produces diadenosine tetraphosphate (Ap4A), a universal pleiotropic signaling molecule needed for cell regulation pathways, by direct condensation of 2 ATPs. Thereby, may play a special role in Ap4A homeostasis. This is Glycine--tRNA ligase (Gars1) from Rattus norvegicus (Rat).